The sequence spans 342 residues: uncharacterized protein (342 aa).

Belongs to the bacterial luciferase oxidoreductase family.

This is an uncharacterized protein from Sinorhizobium fredii (strain NBRC 101917 / NGR234).